Here is a 477-residue protein sequence, read N- to C-terminus: Glycogen synthase (477 aa).

Lys15 contacts ADP-alpha-D-glucose.

This sequence belongs to the glycosyltransferase 1 family. Bacterial/plant glycogen synthase subfamily.

It catalyses the reaction [(1-&gt;4)-alpha-D-glucosyl](n) + ADP-alpha-D-glucose = [(1-&gt;4)-alpha-D-glucosyl](n+1) + ADP + H(+). It participates in glycan biosynthesis; glycogen biosynthesis. In terms of biological role, synthesizes alpha-1,4-glucan chains using ADP-glucose. In Streptococcus pneumoniae (strain JJA), this protein is Glycogen synthase.